We begin with the raw amino-acid sequence, 333 residues long: NADH-quinone oxidoreductase subunit H (333 aa).

The next 8 helical transmembrane spans lie at 17–37, 88–108, 117–137, 159–179, 191–211, 241–261, 273–293, and 313–333; these read IFFA…TYGI, FILA…ALPF, IGVG…GVVT, ISYE…SGSL, VWFI…AVAE, FFML…TVLF, FIPG…LFIW, and VLLP…QLFF.

The protein belongs to the complex I subunit 1 family. In terms of assembly, NDH-1 is composed of 14 different subunits. Subunits NuoA, H, J, K, L, M, N constitute the membrane sector of the complex.

It is found in the cell membrane. The enzyme catalyses a quinone + NADH + 5 H(+)(in) = a quinol + NAD(+) + 4 H(+)(out). Functionally, NDH-1 shuttles electrons from NADH, via FMN and iron-sulfur (Fe-S) centers, to quinones in the respiratory chain. The immediate electron acceptor for the enzyme in this species is believed to be ubiquinone. Couples the redox reaction to proton translocation (for every two electrons transferred, four hydrogen ions are translocated across the cytoplasmic membrane), and thus conserves the redox energy in a proton gradient. This subunit may bind ubiquinone. This Anoxybacillus flavithermus (strain DSM 21510 / WK1) protein is NADH-quinone oxidoreductase subunit H.